Reading from the N-terminus, the 369-residue chain is Geranylgeranyl pyrophosphate synthase, chloroplastic (369 aa).

Isopentenyl diphosphate-binding residues include lysine 118, arginine 121, and histidine 150. Mg(2+)-binding residues include aspartate 157 and aspartate 163. Arginine 168 contributes to the dimethylallyl diphosphate binding site. Arginine 169 provides a ligand contact to isopentenyl diphosphate. Dimethylallyl diphosphate contacts are provided by lysine 254, threonine 255, glutamine 292, lysine 309, and lysine 319.

Belongs to the FPP/GGPP synthase family. Monomer. Mg(2+) is required as a cofactor.

It is found in the plastid. Its subcellular location is the chloroplast. The enzyme catalyses isopentenyl diphosphate + dimethylallyl diphosphate = (2E)-geranyl diphosphate + diphosphate. The catalysed reaction is isopentenyl diphosphate + (2E)-geranyl diphosphate = (2E,6E)-farnesyl diphosphate + diphosphate. It carries out the reaction isopentenyl diphosphate + (2E,6E)-farnesyl diphosphate = (2E,6E,10E)-geranylgeranyl diphosphate + diphosphate. It participates in isoprenoid biosynthesis; farnesyl diphosphate biosynthesis; farnesyl diphosphate from geranyl diphosphate and isopentenyl diphosphate: step 1/1. The protein operates within isoprenoid biosynthesis; geranyl diphosphate biosynthesis; geranyl diphosphate from dimethylallyl diphosphate and isopentenyl diphosphate: step 1/1. Its pathway is isoprenoid biosynthesis; geranylgeranyl diphosphate biosynthesis; geranylgeranyl diphosphate from farnesyl diphosphate and isopentenyl diphosphate: step 1/1. Functionally, catalyzes the trans-addition of the three molecules of IPP onto DMAPP to form geranylgeranyl pyrophosphate. This chain is Geranylgeranyl pyrophosphate synthase, chloroplastic, found in Capsicum annuum (Capsicum pepper).